The sequence spans 315 residues: Holliday junction branch migration complex subunit RuvB (315 aa).

Residues 1 to 168 form a large ATPase domain (RuvB-L) region; it reads MAKKQEIRPK…FGLIGQISNY (168 aa). ATP contacts are provided by residues I7, R8, G49, K52, T53, S54, 115-117, R158, Y168, and R205; that span reads EDF. T53 serves as a coordination point for Mg(2+). The segment at 169-239 is small ATPAse domain (RuvB-S); that stretch reads QVEDIEKIIK…LVNKTLKQLG (71 aa). The segment at 242–315 is head domain (RuvB-H); it reads ENGLNESQVK…QKGISYLERI (74 aa). Residues K297 and R302 each contribute to the DNA site.

The protein belongs to the RuvB family. In terms of assembly, homohexamer. Forms an RuvA(8)-RuvB(12)-Holliday junction (HJ) complex. HJ DNA is sandwiched between 2 RuvA tetramers; dsDNA enters through RuvA and exits via RuvB. An RuvB hexamer assembles on each DNA strand where it exits the tetramer. Each RuvB hexamer is contacted by two RuvA subunits (via domain III) on 2 adjacent RuvB subunits; this complex drives branch migration. In the full resolvosome a probable DNA-RuvA(4)-RuvB(12)-RuvC(2) complex forms which resolves the HJ.

It localises to the cytoplasm. The catalysed reaction is ATP + H2O = ADP + phosphate + H(+). Functionally, the RuvA-RuvB-RuvC complex processes Holliday junction (HJ) DNA during genetic recombination and DNA repair, while the RuvA-RuvB complex plays an important role in the rescue of blocked DNA replication forks via replication fork reversal (RFR). RuvA specifically binds to HJ cruciform DNA, conferring on it an open structure. The RuvB hexamer acts as an ATP-dependent pump, pulling dsDNA into and through the RuvAB complex. RuvB forms 2 homohexamers on either side of HJ DNA bound by 1 or 2 RuvA tetramers; 4 subunits per hexamer contact DNA at a time. Coordinated motions by a converter formed by DNA-disengaged RuvB subunits stimulates ATP hydrolysis and nucleotide exchange. Immobilization of the converter enables RuvB to convert the ATP-contained energy into a lever motion, pulling 2 nucleotides of DNA out of the RuvA tetramer per ATP hydrolyzed, thus driving DNA branch migration. The RuvB motors rotate together with the DNA substrate, which together with the progressing nucleotide cycle form the mechanistic basis for DNA recombination by continuous HJ branch migration. Branch migration allows RuvC to scan DNA until it finds its consensus sequence, where it cleaves and resolves cruciform DNA. The polypeptide is Holliday junction branch migration complex subunit RuvB (Mycoplasmopsis pulmonis (strain UAB CTIP) (Mycoplasma pulmonis)).